Here is a 298-residue protein sequence, read N- to C-terminus: Probable 2-(5''-triphosphoribosyl)-3'-dephosphocoenzyme-A synthase 2 (298 aa).

It belongs to the CitG/MdcB family.

The catalysed reaction is 3'-dephospho-CoA + ATP = 2'-(5''-triphospho-alpha-D-ribosyl)-3'-dephospho-CoA + adenine. The polypeptide is Probable 2-(5''-triphosphoribosyl)-3'-dephosphocoenzyme-A synthase 2 (Salmonella paratyphi A (strain ATCC 9150 / SARB42)).